The sequence spans 368 residues: Phospho-N-acetylmuramoyl-pentapeptide-transferase (368 aa).

9 consecutive transmembrane segments (helical) span residues 30–50 (AAAI…IRFL), 72–92 (VPTM…LLWA), 98–118 (HVWL…IDDY), 139–159 (VALG…SVLL), 170–190 (FSVD…TAVS), 201–221 (GLAA…AYLG), 238–258 (AGEI…FLWF), 262–284 (PAEV…VIAL), and 345–365 (KIVI…LMTL).

Belongs to the glycosyltransferase 4 family. MraY subfamily. Requires Mg(2+) as cofactor.

It is found in the cell inner membrane. It carries out the reaction UDP-N-acetyl-alpha-D-muramoyl-L-alanyl-gamma-D-glutamyl-meso-2,6-diaminopimeloyl-D-alanyl-D-alanine + di-trans,octa-cis-undecaprenyl phosphate = di-trans,octa-cis-undecaprenyl diphospho-N-acetyl-alpha-D-muramoyl-L-alanyl-D-glutamyl-meso-2,6-diaminopimeloyl-D-alanyl-D-alanine + UMP. The protein operates within cell wall biogenesis; peptidoglycan biosynthesis. Functionally, catalyzes the initial step of the lipid cycle reactions in the biosynthesis of the cell wall peptidoglycan: transfers peptidoglycan precursor phospho-MurNAc-pentapeptide from UDP-MurNAc-pentapeptide onto the lipid carrier undecaprenyl phosphate, yielding undecaprenyl-pyrophosphoryl-MurNAc-pentapeptide, known as lipid I. This Chlorobaculum parvum (strain DSM 263 / NCIMB 8327) (Chlorobium vibrioforme subsp. thiosulfatophilum) protein is Phospho-N-acetylmuramoyl-pentapeptide-transferase.